A 433-amino-acid polypeptide reads, in one-letter code: Indole diterpene prenyltransferase terF (433 aa).

It belongs to the tryptophan dimethylallyltransferase family.

It participates in secondary metabolite biosynthesis. In terms of biological role, indole diterpene prenyltransferase; part of the gene cluster that mediates the biosynthesis of terpendoles, indole-diterpene (IDT) mycotoxins including terpendole I, terpendole K, terpendole C, as well as the kinesin Eg5 inhibitor terpendole E. Terpendoles biosynthesis begins with the synthesis of geranylgeranyl diphosphate (GGPP) by a yet unidentified GGPP synthase. Condensation of indole-3-glycerol phosphate with GGPP by the prenyltransferase terC then forms 3-geranylgeranylindole (3-GGI), followed by epoxidation and cyclization of this intermediate (by the FAD-dependent monooxygeanse terM and the terpene cyclase terB) to form paspaline. The cytochrome monooxygenase terQ then hydroxylates paspalline at C-11 to yield terpendole E. The cytochrome monooxygenase terP converts terpendole E to 13-desoxyterpendole I, and terQ converts 13-desoxyterpendole I into terpendole I. TerF and terK are required for conversion of terpendole I to terpendole C which is further converted to terpendole K. This is Indole diterpene prenyltransferase terF from Tolypocladium album (Soil fungus).